The following is a 159-amino-acid chain: MVDRKRNYKDRDNRVEWEERVVSVQRVTKVVKGGKKLSFRAVVVVGDQQGKVGVGVGKASDVSTAVRKGVTDGKKNVITVPLTSSNSIPHKINGRFGAAKLVLRPSAPGCGVIAGGAPRIVLELAGIKNILSKQLGSNSLLNNARATIDGLSNLRTFVA.

Residues 17–80 form the S5 DRBM domain; that stretch reads WEERVVSVQR…TDGKKNVITV (64 aa).

The protein belongs to the universal ribosomal protein uS5 family. Part of the 30S ribosomal subunit. Contacts protein S4.

It localises to the plastid. The protein resides in the chloroplast. In terms of biological role, with S4 and S12 plays an important role in translational accuracy. The chain is Small ribosomal subunit protein uS5c (rps5) from Emiliania huxleyi (Coccolithophore).